Consider the following 350-residue polypeptide: Hydroxymethylglutaryl-CoA synthase (350 aa).

Position 30 (aspartate 30) interacts with (3S)-3-hydroxy-3-methylglutaryl-CoA. Glutamate 82 (proton donor/acceptor) is an active-site residue. Residues cysteine 114, serine 155, threonine 203, and histidine 236 each coordinate (3S)-3-hydroxy-3-methylglutaryl-CoA. Cysteine 114 acts as the Acyl-thioester intermediate in catalysis. The Proton donor/acceptor role is filled by histidine 236. Residue arginine 241 participates in CoA binding. (3S)-3-hydroxy-3-methylglutaryl-CoA-binding residues include arginine 245, asparagine 268, and serine 298.

Belongs to the thiolase-like superfamily. Archaeal HMG-CoA synthase family. In terms of assembly, interacts with acetoacetyl-CoA thiolase that catalyzes the precedent step in the pathway and with a DUF35 protein. The acetoacetyl-CoA thiolase/HMG-CoA synthase complex channels the intermediate via a fused CoA-binding site, which allows for efficient coupling of the endergonic thiolase reaction with the exergonic HMGCS reaction.

The enzyme catalyses acetoacetyl-CoA + acetyl-CoA + H2O = (3S)-3-hydroxy-3-methylglutaryl-CoA + CoA + H(+). It participates in metabolic intermediate biosynthesis; (R)-mevalonate biosynthesis; (R)-mevalonate from acetyl-CoA: step 2/3. Functionally, catalyzes the condensation of acetyl-CoA with acetoacetyl-CoA to form 3-hydroxy-3-methylglutaryl-CoA (HMG-CoA). Functions in the mevalonate (MVA) pathway leading to isopentenyl diphosphate (IPP), a key precursor for the biosynthesis of isoprenoid compounds that are building blocks of archaeal membrane lipids. The chain is Hydroxymethylglutaryl-CoA synthase from Pyrobaculum calidifontis (strain DSM 21063 / JCM 11548 / VA1).